The sequence spans 105 residues: MKMIRAVVRPSKAEEVVDALAESGCLALTKMDVIGRGKQKGIKIDQIYYDELPKTMLMLVVEDDTAENVIELITKTAYTGSFGYGKIFVSPVDEAYTVRTRSCGL.

Belongs to the P(II) protein family.

Its function is as follows. Could be involved in the regulation of nitrogen fixation. The polypeptide is Nitrogen fixation nifHD region glnB-like protein 1 (glnBI) (Methanococcus maripaludis (Methanococcus deltae)).